Here is a 128-residue protein sequence, read N- to C-terminus: Probable 4-amino-4-deoxy-L-arabinose-phosphoundecaprenol flippase subunit ArnF (128 aa).

Residues 1–2 (MG) lie on the Cytoplasmic side of the membrane. Residues 3–23 (LMWGLFSVIIASAAQLSLGFA) traverse the membrane as a helical segment. Residues 24 to 35 (ASHLPPMTHLWD) are Periplasmic-facing. Residues 36–56 (FIAALLAFGLDARILLLGLLG) traverse the membrane as a helical segment. The Cytoplasmic segment spans residues 57–76 (YLLSVFCWYKTLHKLALSKA). The helical transmembrane segment at 77 to 97 (YALLSMSYVLVWIASMVLPGW) threads the bilayer. The Periplasmic portion of the chain corresponds to 98-100 (EGT). Residues 101–121 (FSLKALLGVACIMSGLMLIFL) traverse the membrane as a helical segment. Over 122 to 128 (PTTKQRY) the chain is Cytoplasmic.

This sequence belongs to the ArnF family. Heterodimer of ArnE and ArnF.

It is found in the cell inner membrane. The protein operates within bacterial outer membrane biogenesis; lipopolysaccharide biosynthesis. Functionally, translocates 4-amino-4-deoxy-L-arabinose-phosphoundecaprenol (alpha-L-Ara4N-phosphoundecaprenol) from the cytoplasmic to the periplasmic side of the inner membrane. This Escherichia coli O127:H6 (strain E2348/69 / EPEC) protein is Probable 4-amino-4-deoxy-L-arabinose-phosphoundecaprenol flippase subunit ArnF.